Consider the following 68-residue polypeptide: Large ribosomal subunit protein uL29 (68 aa).

It belongs to the universal ribosomal protein uL29 family.

This chain is Large ribosomal subunit protein uL29, found in Nitrobacter winogradskyi (strain ATCC 25391 / DSM 10237 / CIP 104748 / NCIMB 11846 / Nb-255).